Here is a 332-residue protein sequence, read N- to C-terminus: MTLDQKGLKKRSVTVAYFFNNIGKKHDIRLRRMNTVDEQERRIFERDLHRPGLALAGFTNLFTYKRLQILGNTETRFLNHLGEEERKAAFANLTRFKVPCIILTSNNKLQPELLDMATAAGIPVYVTRQSSTKAIYLVTDFLDDQFSLYQQYHGSMVDVYGVGVLLTGKSGLGKSEIALDLVERGHGLVADDVVVIRRKGETMQLSASRNNIIDHFMEIRGLGVVDVKANFGIRAIRDVKEVLVVVELLEWNKEMEYERLGLDTKTIRILGVDVPLVQLPIFPGKNITVIIEVVALNFLLKRYSNYVAAEALTDRIKKVIHNDDRTAGDILV.

Active-site residues include H153 and K174. Residue G168–S175 coordinates ATP. S175 serves as a coordination point for Mg(2+). D192 functions as the Proton acceptor; for phosphorylation activity. Proton donor; for dephosphorylation activity in the catalytic mechanism. The segment at M217–D226 is important for the catalytic mechanism of both phosphorylation and dephosphorylation. E218 contacts Mg(2+). The active site involves R259. The tract at residues P280 to K285 is important for the catalytic mechanism of dephosphorylation.

Belongs to the HPrK/P family. Homohexamer. The cofactor is Mg(2+).

The enzyme catalyses [HPr protein]-L-serine + ATP = [HPr protein]-O-phospho-L-serine + ADP + H(+). The catalysed reaction is [HPr protein]-O-phospho-L-serine + phosphate + H(+) = [HPr protein]-L-serine + diphosphate. Catalyzes the ATP- as well as the pyrophosphate-dependent phosphorylation of a specific serine residue in HPr, a phosphocarrier protein of the phosphoenolpyruvate-dependent sugar phosphotransferase system (PTS). HprK/P also catalyzes the pyrophosphate-producing, inorganic phosphate-dependent dephosphorylation (phosphorolysis) of seryl-phosphorylated HPr (P-Ser-HPr). The sequence is that of HPr kinase/phosphorylase from Chlorobium luteolum (strain DSM 273 / BCRC 81028 / 2530) (Pelodictyon luteolum).